A 467-amino-acid chain; its full sequence is Uronate isomerase (467 aa).

Belongs to the metallo-dependent hydrolases superfamily. Uronate isomerase family.

It carries out the reaction D-glucuronate = D-fructuronate. The enzyme catalyses aldehydo-D-galacturonate = keto-D-tagaturonate. The protein operates within carbohydrate metabolism; pentose and glucuronate interconversion. The sequence is that of Uronate isomerase from Haemophilus influenzae (strain 86-028NP).